The primary structure comprises 165 residues: MASTSSFDVVSDFDRQELVNTLDQVRRDVSTRYDLKDSKTEIVLEETEMVITTASDMTLQAVEDVLRAKATKRNLSLKIFDFQTPESVGGNRIQQVVKLRKGLSQEIAKKLSKIVRDELKKVTVAIQGESVRITGKSKDDLQAAIQLVKSKEDELDVPLQFENYR.

Belongs to the YajQ family.

In terms of biological role, nucleotide-binding protein. The chain is Nucleotide-binding protein Syncc9902_1708 from Synechococcus sp. (strain CC9902).